The primary structure comprises 259 residues: UPF0246 protein PputGB1_4560 (259 aa).

The protein belongs to the UPF0246 family.

In Pseudomonas putida (strain GB-1), this protein is UPF0246 protein PputGB1_4560.